The following is a 505-amino-acid chain: ATP synthase subunit alpha (505 aa).

The disordered stretch occupies residues 118–138; it reads VDGLGPINTTNTRPIESPAPG. 172–179 is a binding site for ATP; sequence GDRQTGKT.

This sequence belongs to the ATPase alpha/beta chains family. F-type ATPases have 2 components, CF(1) - the catalytic core - and CF(0) - the membrane proton channel. CF(1) has five subunits: alpha(3), beta(3), gamma(1), delta(1), epsilon(1). CF(0) has three main subunits: a(1), b(2) and c(9-12). The alpha and beta chains form an alternating ring which encloses part of the gamma chain. CF(1) is attached to CF(0) by a central stalk formed by the gamma and epsilon chains, while a peripheral stalk is formed by the delta and b chains.

It is found in the cell membrane. The catalysed reaction is ATP + H2O + 4 H(+)(in) = ADP + phosphate + 5 H(+)(out). In terms of biological role, produces ATP from ADP in the presence of a proton gradient across the membrane. The alpha chain is a regulatory subunit. The chain is ATP synthase subunit alpha from Bacillus cereus (strain ATCC 14579 / DSM 31 / CCUG 7414 / JCM 2152 / NBRC 15305 / NCIMB 9373 / NCTC 2599 / NRRL B-3711).